The sequence spans 219 residues: Glycosylphosphatidylinositol anchor biosynthesis protein 11 (219 aa).

The Cytoplasmic portion of the chain corresponds to 1-45 (MPAKKRTRKTVKKTVSFSDDTTLTTHQNREKKNVDHDRPPVYVRK). A Phosphoserine modification is found at Ser-16. The helical transmembrane segment at 46–66 (TPLMTFPYHLVALLYYYVFVS) threads the bilayer. Ser-67 is a topological domain (lumenal). The helical transmembrane segment at 68 to 88 (NFNTVKLLSFLIPTQVAYLVL) threads the bilayer. The Cytoplasmic segment spans residues 89 to 108 (QFNKCTVYGNKIIKINYSLT). A helical transmembrane segment spans residues 109–129 (IICLGVTFLLSFPTMLLTILF). The Lumenal segment spans residues 130-135 (GAPLMD). Residues 136-156 (LLWETWLLSLHFAFLAYPAVY) form a helical membrane-spanning segment. The Cytoplasmic portion of the chain corresponds to 157 to 170 (SVFNCDFKVGLWKK). Residues 171–191 (YFIFIVVGGWISCVVIPLDWD) traverse the membrane as a helical segment. Residues 192–198 (RDWQNWP) lie on the Lumenal side of the membrane. Residues 199 to 217 (IPIVVGGYLGALVGYTIGA) traverse the membrane as a helical segment. Residues 218-219 (YI) lie on the Cytoplasmic side of the membrane.

The protein belongs to the PIGF family.

The protein resides in the endoplasmic reticulum membrane. It functions in the pathway glycolipid biosynthesis; glycosylphosphatidylinositol-anchor biosynthesis. Functionally, acts in the GPI biosynthetic pathway between GlcNAc-PI synthesis and GPI transfer to protein. Required for the formation of complete GPI precursors CP1 and CP2. This Saccharomyces cerevisiae (strain ATCC 204508 / S288c) (Baker's yeast) protein is Glycosylphosphatidylinositol anchor biosynthesis protein 11 (GPI11).